A 762-amino-acid chain; its full sequence is cGMP-dependent protein kinase 2 (762 aa).

The segment at 1-25 is disordered; sequence MGNGSVKPKHSKHPDGQSGNLSNEA. Gly2 carries the N-myristoyl glycine lipid modification. Ser110 and Ser117 each carry phosphoserine. The segment at 112–138 is disordered; that stretch reads LVSLHSRRGAKAGVSAEPTSRTYDLNK. The interval 168–283 is cGMP-binding, high affinity; cAMP-binding, moderate affinity; the sequence is FLKRLDPQQI…DEEYRNFLRS (116 aa). 3',5'-cyclic GMP is bound by residues 232-235, 242-243, Lys347, 356-359, 366-367, Asp412, and Arg415; these read GELA, RT, GEKA, and RS. The cGMP-binding, high affinity; cAMP-binding, low affinity stretch occupies residues 286 to 416; that stretch reads LLKNLPEDKL…TLNRDDEKRH (131 aa). Position 431 is a phosphoserine (Ser431). The Protein kinase domain maps to 453-711; that stretch reads LEIIATLGVG…INDIKKHRWL (259 aa). Residues 459–467 and Lys482 contribute to the ATP site; that span reads LGVGGFGRV. The Proton acceptor role is filled by Asp576. Position 609 is a phosphothreonine (Thr609). The AGC-kinase C-terminal domain maps to 712-762; it reads NGFNWEGLKARSLPSPLRRELSGPIDHSYFDKYPPEKGVPPDEMSGWDKDF. Residues 740-762 are disordered; it reads YFDKYPPEKGVPPDEMSGWDKDF.

The protein belongs to the protein kinase superfamily. AGC Ser/Thr protein kinase family. cGMP subfamily. In terms of assembly, interacts with GRIA1/GLUR1. Myristoylation mediates membrane localization. Highly expressed in intestinal mucosa and is 20 times less abundant in brain and kidney. Expressed in jejunum, in the apical domain of the villus epithelium.

The protein localises to the apical cell membrane. It localises to the cell membrane. The enzyme catalyses L-seryl-[protein] + ATP = O-phospho-L-seryl-[protein] + ADP + H(+). The catalysed reaction is L-threonyl-[protein] + ATP = O-phospho-L-threonyl-[protein] + ADP + H(+). With respect to regulation, binding of cGMP results in enzyme activation. Functionally, crucial regulator of intestinal secretion and bone growth. Phosphorylates and activates CFTR on the plasma membrane. Plays a key role in intestinal secretion by regulating cGMP-dependent translocation of CFTR in jejunum. Acts downstream of NMDAR to activate the plasma membrane accumulation of GRIA1/GLUR1 in synapse and increase synaptic plasticity. Phosphorylates GRIA1/GLUR1 at Ser-863. Acts as regulator of gene expression and activator of the extracellular signal-regulated kinases MAPK3/ERK1 and MAPK1/ERK2 in mechanically stimulated osteoblasts. Under fluid shear stress, mediates ERK activation and subsequent induction of FOS, FOSL1/FRA1, FOSL2/FRA2 and FOSB that play a key role in the osteoblast anabolic response to mechanical stimulation. The chain is cGMP-dependent protein kinase 2 (Prkg2) from Rattus norvegicus (Rat).